Consider the following 224-residue polypeptide: Urease accessory protein UreF (224 aa).

The protein belongs to the UreF family. UreD, UreF and UreG form a complex that acts as a GTP-hydrolysis-dependent molecular chaperone, activating the urease apoprotein by helping to assemble the nickel containing metallocenter of UreC. The UreE protein probably delivers the nickel.

It localises to the cytoplasm. Functionally, required for maturation of urease via the functional incorporation of the urease nickel metallocenter. This chain is Urease accessory protein UreF, found in Escherichia coli O157:H7.